Consider the following 316-residue polypeptide: Olfactory receptor 51J1 (316 aa).

The Extracellular portion of the chain corresponds to 1-31 (MKISNNSLGFLPTTFILVGIPGLESEHLWIS). The N-linked (GlcNAc...) asparagine glycan is linked to asparagine 5. The helical transmembrane segment at 32–52 (VPFSLIYIIIFLGNGIILHVI) threads the bilayer. Topologically, residues 53 to 63 (RTDIALHQPMY) are cytoplasmic. Residues 64 to 84 (LFLAMLALAEVRVSASTLPTV) traverse the membrane as a helical segment. The Extracellular portion of the chain corresponds to 85-104 (LGIFLFGNTEISLEACLFPD). Cysteines 100 and 191 form a disulfide. Residues 105–125 (VLHPFFIHDGASCAAGHVFGP) traverse the membrane as a helical segment. Residues 126-161 (LYSHLQPTELHSYPDTAQGLWHRSYYRTEKHYAHGS) lie on the Cytoplasmic side of the membrane. A helical transmembrane segment spans residues 162 to 182 (VAHSLMASALLWPQCPLTFLL). The Extracellular portion of the chain corresponds to 183 to 191 (SAPQSYLSC). Residues 192–212 (GNISVNNIYGIFIVTSTFGLD) traverse the membrane as a helical segment. At 213 to 242 (SLLIVISYGLILHTVLGIATGEGRKKALNT) the chain is on the cytoplasmic side. Residues 243–263 (CGSHVCAVLAYYVPMIGLSIV) traverse the membrane as a helical segment. Residues 264-275 (HRLGHRVSPLLQ) are Extracellular-facing. A helical transmembrane segment spans residues 276-296 (AMMANAYLFFPPVVNPIVYSI). The Cytoplasmic segment spans residues 297 to 316 (KTKEIHGAIVRMLLEKRRRV).

This sequence belongs to the G-protein coupled receptor 1 family.

It is found in the cell membrane. Its function is as follows. Odorant receptor. The protein is Olfactory receptor 51J1 (OR51J1) of Homo sapiens (Human).